Reading from the N-terminus, the 270-residue chain is Glutamate racemase (270 aa).

Substrate-binding positions include 10–11 (DS) and 42–43 (YG). The Proton donor/acceptor role is filled by Cys73. 74–75 (NT) contacts substrate. Catalysis depends on Cys184, which acts as the Proton donor/acceptor. 185-186 (TH) contacts substrate.

The protein belongs to the aspartate/glutamate racemases family.

It carries out the reaction L-glutamate = D-glutamate. The protein operates within cell wall biogenesis; peptidoglycan biosynthesis. Provides the (R)-glutamate required for cell wall biosynthesis. This chain is Glutamate racemase, found in Geobacter metallireducens (strain ATCC 53774 / DSM 7210 / GS-15).